A 227-amino-acid polypeptide reads, in one-letter code: 7-cyano-7-deazaguanine synthase (227 aa).

Residue 8-18 (FSGGQDSTTCL) coordinates ATP. Zn(2+) is bound by residues Cys-187, Cys-196, Cys-199, and Cys-202.

This sequence belongs to the QueC family. Zn(2+) is required as a cofactor.

It carries out the reaction 7-carboxy-7-deazaguanine + NH4(+) + ATP = 7-cyano-7-deazaguanine + ADP + phosphate + H2O + H(+). It participates in purine metabolism; 7-cyano-7-deazaguanine biosynthesis. Functionally, catalyzes the ATP-dependent conversion of 7-carboxy-7-deazaguanine (CDG) to 7-cyano-7-deazaguanine (preQ(0)). This is 7-cyano-7-deazaguanine synthase from Aliivibrio salmonicida (strain LFI1238) (Vibrio salmonicida (strain LFI1238)).